We begin with the raw amino-acid sequence, 391 residues long: Na(+)/H(+) antiporter NhaA (391 aa).

Transmembrane regions (helical) follow at residues 14–34 (AGGILLMVSVVLAMILANSPL), 59–79 (LIHWINDGLMAIFFMLIGLEV), 95–115 (SLPTFAAIGGMVFPAAVYLIF), 124–144 (VGWAIPAATDIAFALGIMALL), 154–174 (VFLLALAIIDDLGVVVIIALF), 177–197 (TDLSTISLIIAAAAILGLIGL), 213–233 (LILWIAVLKSGVHATLAGVII), 261–281 (FIILPIFAFANAGVDLSGMSL), 292–312 (IALGLLVGKPLGIMLFSYIAV), 331–351 (VAVMCGIGFTMSMFISSLAFV), and 363–383 (LGILLGSIASATIGYFWLSKV).

Belongs to the NhaA Na(+)/H(+) (TC 2.A.33) antiporter family.

Its subcellular location is the cell inner membrane. The catalysed reaction is Na(+)(in) + 2 H(+)(out) = Na(+)(out) + 2 H(+)(in). Functionally, na(+)/H(+) antiporter that extrudes sodium in exchange for external protons. The chain is Na(+)/H(+) antiporter NhaA from Shewanella pealeana (strain ATCC 700345 / ANG-SQ1).